The chain runs to 202 residues: Probable molybdenum cofactor guanylyltransferase (202 aa).

Residues 9–11, Lys22, Asn50, Asp77, and Asp102 each bind GTP; that span reads VAG. Asp102 is a Mg(2+) binding site.

The protein belongs to the MobA family. It depends on Mg(2+) as a cofactor.

Its subcellular location is the cytoplasm. It catalyses the reaction Mo-molybdopterin + GTP + H(+) = Mo-molybdopterin guanine dinucleotide + diphosphate. Its function is as follows. Transfers a GMP moiety from GTP to Mo-molybdopterin (Mo-MPT) cofactor (Moco or molybdenum cofactor) to form Mo-molybdopterin guanine dinucleotide (Mo-MGD) cofactor. This Natronomonas pharaonis (strain ATCC 35678 / DSM 2160 / CIP 103997 / JCM 8858 / NBRC 14720 / NCIMB 2260 / Gabara) (Halobacterium pharaonis) protein is Probable molybdenum cofactor guanylyltransferase.